The following is a 254-amino-acid chain: Alcohol dehydrogenase (254 aa).

10 to 33 (FVAGLGGIGLDTSRELVKRDLKNL) provides a ligand contact to NAD(+). Residue S138 participates in substrate binding. The active-site Proton acceptor is the Y151.

It belongs to the short-chain dehydrogenases/reductases (SDR) family. As to quaternary structure, homodimer.

It catalyses the reaction a primary alcohol + NAD(+) = an aldehyde + NADH + H(+). The enzyme catalyses a secondary alcohol + NAD(+) = a ketone + NADH + H(+). In Drosophila subobscura (Fruit fly), this protein is Alcohol dehydrogenase (Adh).